The following is a 177-amino-acid chain: MSRVGKSPVSIPAGVDVSIKDDQISVKGAGGVLSLAQNALVKVSNNEGKLSFEPVNDSREANAMSGTVRQLVNNMVVGVSKGFEKKLTLIGVGFKAAASGNKLNLAIGFSHPVNFEMPTGITVATPTPTEIVIKGADRQVVGQLAAEIRAVRPPEPYKGKGIRYADEKVTIKETKKK.

Belongs to the universal ribosomal protein uL6 family. Part of the 50S ribosomal subunit.

This protein binds to the 23S rRNA, and is important in its secondary structure. It is located near the subunit interface in the base of the L7/L12 stalk, and near the tRNA binding site of the peptidyltransferase center. In Acidovorax ebreus (strain TPSY) (Diaphorobacter sp. (strain TPSY)), this protein is Large ribosomal subunit protein uL6.